Reading from the N-terminus, the 275-residue chain is Tryptophan synthase alpha chain (275 aa).

Active-site proton acceptor residues include E51 and D62.

The protein belongs to the TrpA family. As to quaternary structure, tetramer of two alpha and two beta chains.

It carries out the reaction (1S,2R)-1-C-(indol-3-yl)glycerol 3-phosphate + L-serine = D-glyceraldehyde 3-phosphate + L-tryptophan + H2O. It functions in the pathway amino-acid biosynthesis; L-tryptophan biosynthesis; L-tryptophan from chorismate: step 5/5. Functionally, the alpha subunit is responsible for the aldol cleavage of indoleglycerol phosphate to indole and glyceraldehyde 3-phosphate. This is Tryptophan synthase alpha chain from Methanopyrus kandleri (strain AV19 / DSM 6324 / JCM 9639 / NBRC 100938).